Reading from the N-terminus, the 354-residue chain is DNA polymerase IV 2 (354 aa).

The UmuC domain maps to Ile4–Gly184. Residues Asp8 and Asp102 each contribute to the Mg(2+) site. The active site involves Glu103.

It belongs to the DNA polymerase type-Y family. Monomer. The cofactor is Mg(2+).

Its subcellular location is the cytoplasm. It carries out the reaction DNA(n) + a 2'-deoxyribonucleoside 5'-triphosphate = DNA(n+1) + diphosphate. Its function is as follows. Poorly processive, error-prone DNA polymerase involved in untargeted mutagenesis. Copies undamaged DNA at stalled replication forks, which arise in vivo from mismatched or misaligned primer ends. These misaligned primers can be extended by PolIV. Exhibits no 3'-5' exonuclease (proofreading) activity. May be involved in translesional synthesis, in conjunction with the beta clamp from PolIII. The sequence is that of DNA polymerase IV 2 (dinB2) from Rhizobium meliloti (strain 1021) (Ensifer meliloti).